The following is a 311-amino-acid chain: tRNA(Ile)-lysidine synthase (311 aa).

32–37 contributes to the ATP binding site; that stretch reads SGGPDS.

The protein belongs to the tRNA(Ile)-lysidine synthase family.

It localises to the cytoplasm. It carries out the reaction cytidine(34) in tRNA(Ile2) + L-lysine + ATP = lysidine(34) in tRNA(Ile2) + AMP + diphosphate + H(+). Its function is as follows. Ligates lysine onto the cytidine present at position 34 of the AUA codon-specific tRNA(Ile) that contains the anticodon CAU, in an ATP-dependent manner. Cytidine is converted to lysidine, thus changing the amino acid specificity of the tRNA from methionine to isoleucine. This Cutibacterium acnes (strain DSM 16379 / KPA171202) (Propionibacterium acnes) protein is tRNA(Ile)-lysidine synthase.